Consider the following 310-residue polypeptide: uncharacterized protein (310 aa).

Over Met1 to Ala6 the chain is Cytoplasmic. The 65-residue stretch at Lys5–Gln69 folds into the PQ-loop 1 domain. Residues Ala7–Ile27 traverse the membrane as a helical segment. At Tyr28–Thr36 the chain is on the extracellular side. Residues Gly37–Phe57 form a helical membrane-spanning segment. At Cys58–Lys61 the chain is on the cytoplasmic side. Residues Gly62 to Val82 traverse the membrane as a helical segment. Residues Gln83–Lys96 are Extracellular-facing. Residues Ile97–Leu117 traverse the membrane as a helical segment. The Cytoplasmic segment spans residues Trp118–Asp131. A helical transmembrane segment spans residues Leu132 to Glu152. A PQ-loop 2 domain is found at Ala138–Leu194. Topologically, residues Leu153–Asn164 are extracellular. A helical transmembrane segment spans residues Phe165–Gly185. The Cytoplasmic segment spans residues Asn186–Gly191. The chain crosses the membrane as a helical span at residues Ile192–Trp212. Residues Trp213–Val310 lie on the Extracellular side of the membrane. A Phosphoserine modification is found at Ser229. N-linked (GlcNAc...) asparagine glycosylation is found at Asn251 and Asn259.

It is found in the cell membrane. This is an uncharacterized protein from Saccharomyces cerevisiae (strain ATCC 204508 / S288c) (Baker's yeast).